Reading from the N-terminus, the 614-residue chain is Adenylate kinase 7 (614 aa).

Residues 258 to 503 (PIKICILGPP…KEIGKPRNYG (246 aa)) form an adenylate kinase region. 268-273 (AVGKSS) contacts ATP. An NMP region spans residues 288–346 (KMKDVIAEAIAKLEAIVAPKDSVEGEEEGEEEEEEENVDDAQELLDGIKESMEQNAGRL). Residues 308–327 (DSVEGEEEGEEEEEEENVDD) are disordered. A compositionally biased stretch (acidic residues) spans 311 to 327 (EGEEEGEEEEEEENVDD). Residues 323–346 (ENVD…AGRL), 373–376 (GFPK), and glutamine 380 each bind AMP. Residues 376 to 568 (KTYDQAKDLF…EERELLEVQS (193 aa)) are a coiled coil. The segment at 428–438 (NLPESVVAGTH) is LID. Residue arginine 446 coordinates AMP. Glycine 478 is a binding site for ATP. The tract at residues 570-614 (PLRNYLMTYVMPTLMQGLNECCKVRPEDPVDFLAEYLFKNNPEMQ) is DPY-30.

In the central section; belongs to the adenylate kinase family. The protein in the C-terminal section; belongs to the dpy-30 family.

It localises to the cytoplasm. The protein localises to the cytosol. The protein resides in the cell projection. Its subcellular location is the cilium. It is found in the flagellum. The catalysed reaction is AMP + ATP = 2 ADP. It carries out the reaction a 2'-deoxyribonucleoside 5'-diphosphate + ATP = a 2'-deoxyribonucleoside 5'-triphosphate + ADP. It catalyses the reaction a ribonucleoside 5'-diphosphate + ATP = a ribonucleoside 5'-triphosphate + ADP. Its function is as follows. Nucleoside monophosphate (NMP) kinase that catalyzes the reversible transfer of the terminal phosphate group between nucleoside triphosphates and monophosphates. Has highest activity toward AMP, and weaker activity toward dAMP, CMP and dCMP. Also displays broad nucleoside diphosphate kinase activity. Involved in maintaining ciliary structure and function. The chain is Adenylate kinase 7 (Ak7) from Mus musculus (Mouse).